The chain runs to 402 residues: Cytochrome b561 and DOMON domain-containing protein At4g17280 (402 aa).

Residues 1 to 31 (MSNHMSIMKFLNQILCLSLILSISMTTLSFA) form the signal peptide. The 118-residue stretch at 54 to 171 (LDSFLHYTYE…GTINTVWQDG (118 aa)) folds into the DOMON domain. The region spanning 183-379 (TSGNNVRSVS…LEAFTWYVVI (197 aa)) is the Cytochrome b561 domain. Transmembrane regions (helical) follow at residues 218–238 (IHGI…AIIA) and 250–270 (AWFY…VAGW). Heme b-binding residues include histidine 219, histidine 255, and histidine 288. A helical membrane pass occupies residues 290 to 310 (AIGIALFSLATVQVFAMFLRP). Histidine 324 is a binding site for heme b. Transmembrane regions (helical) follow at residues 326-346 (TIGY…LGIL) and 359-379 (IIVV…YVVI).

It depends on heme b as a cofactor.

Its subcellular location is the membrane. Functionally, may act as a catecholamine-responsive trans-membrane electron transporter. The protein is Cytochrome b561 and DOMON domain-containing protein At4g17280 of Arabidopsis thaliana (Mouse-ear cress).